The following is a 644-amino-acid chain: Magnetosome protein MamZ (644 aa).

The segment at 1–427 (MPRNAEAPAK…YAAWLLANGI (427 aa)) is major facilitator domain. 18 consecutive transmembrane segments (helical) span residues 22–42 (WNII…SISI), 63–83 (ADIQ…FGLL), 92–112 (IIAL…LSLQ), 113–133 (VGLA…VLLT), 159–179 (LMGN…AIVM), 185–205 (PGGV…GFQL), 254–274 (VIIL…LVGV), 281–301 (AHAA…VPLW), 311–331 (ISAI…LGMF), 337–357 (WLVA…FVTL), 369–389 (ILGA…VMLV), 403–423 (APFI…AWLL), 440–460 (TVDW…WLVG), 478–498 (VGFV…ISLA), 518–538 (IGLF…ALEW), 553–573 (PFIL…FTSA), 588–608 (LHSA…LAAN), and 612–629 (GEPY…WYRF). The ferric reductase-like domain stretch occupies residues 488 to 599 (WAFTFLIISL…SATYVINALV (112 aa)).

The protein in the N-terminal section; belongs to the major facilitator superfamily.

The protein resides in the magnetosome membrane. Required for correct biomineralization of the magnetosome; probably converts and then transports some form of iron. It is partially functionally redundant with MamH. May function with MamX, MamY amd Mms6. The polypeptide is Magnetosome protein MamZ (Paramagnetospirillum magneticum (strain ATCC 700264 / AMB-1) (Magnetospirillum magneticum)).